A 451-amino-acid polypeptide reads, in one-letter code: Probable phosphoglucosamine mutase (451 aa).

Serine 96 serves as the catalytic Phosphoserine intermediate. Residues serine 96, aspartate 233, aspartate 235, and aspartate 237 each contribute to the Mg(2+) site. Serine 96 is modified (phosphoserine).

This sequence belongs to the phosphohexose mutase family. Requires Mg(2+) as cofactor. In terms of processing, activated by phosphorylation.

The catalysed reaction is alpha-D-glucosamine 1-phosphate = D-glucosamine 6-phosphate. Catalyzes the conversion of glucosamine-6-phosphate to glucosamine-1-phosphate. The chain is Probable phosphoglucosamine mutase from Pyrococcus abyssi (strain GE5 / Orsay).